Here is a 547-residue protein sequence, read N- to C-terminus: Pyochelin synthase PchD (547 aa).

The protein belongs to the ATP-dependent AMP-binding enzyme family.

It carries out the reaction salicylate + holo-[ACP] + ATP = salicyl-[ACP] + AMP + diphosphate. The protein operates within siderophore biosynthesis. It functions in the pathway antifungal biosynthesis. Functionally, involved in the biosynthesis of the siderophore pyochelin. Specifically adenylates salicylate and loads it onto the holo form of PchE via a thioester linkage to the phosphopanthetheine moiety. Is also involved in the synthesis of the antifungal antibiotic dihydroaeruginoic acid (Dha or hydroxyphenyl-thiazolinyl-carboxylate), a precursor of pyochelin. The polypeptide is Pyochelin synthase PchD (Pseudomonas aeruginosa (strain ATCC 15692 / DSM 22644 / CIP 104116 / JCM 14847 / LMG 12228 / 1C / PRS 101 / PAO1)).